A 103-amino-acid polypeptide reads, in one-letter code: Cytotoxin-like protein TA-BMBGT3 (103 aa).

An N-terminal signal peptide occupies residues 1–21; it reads MKTLLLTLVVVTIICLDLGYT. Intrachain disulfides connect Cys-24-Cys-45, Cys-27-Cys-37, Cys-38-Cys-72, Cys-76-Cys-90, and Cys-91-Cys-96.

It belongs to the three-finger toxin family. Ancestral subfamily. Orphan group XVII sub-subfamily. In terms of tissue distribution, expressed by the venom gland.

The protein localises to the secreted. This Bungarus multicinctus (Many-banded krait) protein is Cytotoxin-like protein TA-BMBGT3.